We begin with the raw amino-acid sequence, 1377 residues long: Dicer-like protein 2 (1377 aa).

In terms of domain architecture, Helicase ATP-binding spans 23–203; that stretch reads MFEASLQENI…LSMIESNMNA (181 aa). 36–43 lines the ATP pocket; sequence MDTGSGKT. The DEAH box motif lies at 144–147; that stretch reads DEAH. A Helicase C-terminal domain is found at 367–544; sequence KLEALISFLS…ALALETMAEV (178 aa). Residues 563 to 657 form the Dicer dsRNA-binding fold domain; sequence AVARLHHFCS…LPLTRKPELR (95 aa). RNase III domains follow at residues 916–1056 and 1090–1274; these read ATRL…MDGG and NDSL…VDSR. Positions 1129, 1260, and 1263 each coordinate Mg(2+).

This sequence belongs to the helicase family. Dicer subfamily. Requires Mg(2+) as cofactor. Mn(2+) serves as cofactor.

Its function is as follows. Dicer-like endonuclease involved in cleaving double-stranded RNA in the RNA interference (RNAi) pathway. Produces 21 to 25 bp dsRNAs (siRNAs) which target the selective destruction of homologous RNAs leading to sequence-specific suppression of gene expression, called post-transcriptional gene silencing (PTGS). Part of a broad host defense response against viral infection and transposons. The polypeptide is Dicer-like protein 2 (dcl2) (Aspergillus terreus (strain NIH 2624 / FGSC A1156)).